Here is a 346-residue protein sequence, read N- to C-terminus: Phosphate acyltransferase (346 aa).

This sequence belongs to the PlsX family. In terms of assembly, homodimer. Probably interacts with PlsY.

The protein localises to the cytoplasm. The enzyme catalyses a fatty acyl-[ACP] + phosphate = an acyl phosphate + holo-[ACP]. Its pathway is lipid metabolism; phospholipid metabolism. Functionally, catalyzes the reversible formation of acyl-phosphate (acyl-PO(4)) from acyl-[acyl-carrier-protein] (acyl-ACP). This enzyme utilizes acyl-ACP as fatty acyl donor, but not acyl-CoA. This Geobacter sulfurreducens (strain ATCC 51573 / DSM 12127 / PCA) protein is Phosphate acyltransferase.